A 208-amino-acid chain; its full sequence is Holliday junction branch migration complex subunit RuvA (208 aa).

The domain I stretch occupies residues 1 to 63 (MIGMLTGRVE…QDAITLHGFL (63 aa)). The interval 64 to 142 (DRDAKKTFLQ…LSQIEGASAQ (79 aa)) is domain II. The segment at 143-151 (AATSKSPVD) is flexible linker. The tract at residues 151–208 (DTGTEQVVEGLISLGWRQQDAQQAVAEACAENDIPTPLATDDVPRVLRLALALMDRGR) is domain III.

Belongs to the RuvA family. In terms of assembly, homotetramer. Forms an RuvA(8)-RuvB(12)-Holliday junction (HJ) complex. HJ DNA is sandwiched between 2 RuvA tetramers; dsDNA enters through RuvA and exits via RuvB. An RuvB hexamer assembles on each DNA strand where it exits the tetramer. Each RuvB hexamer is contacted by two RuvA subunits (via domain III) on 2 adjacent RuvB subunits; this complex drives branch migration. In the full resolvosome a probable DNA-RuvA(4)-RuvB(12)-RuvC(2) complex forms which resolves the HJ.

Its subcellular location is the cytoplasm. Functionally, the RuvA-RuvB-RuvC complex processes Holliday junction (HJ) DNA during genetic recombination and DNA repair, while the RuvA-RuvB complex plays an important role in the rescue of blocked DNA replication forks via replication fork reversal (RFR). RuvA specifically binds to HJ cruciform DNA, conferring on it an open structure. The RuvB hexamer acts as an ATP-dependent pump, pulling dsDNA into and through the RuvAB complex. HJ branch migration allows RuvC to scan DNA until it finds its consensus sequence, where it cleaves and resolves the cruciform DNA. The sequence is that of Holliday junction branch migration complex subunit RuvA from Bifidobacterium longum (strain DJO10A).